Here is a 394-residue protein sequence, read N- to C-terminus: NAD(P)H-quinone oxidoreductase subunit H (394 aa).

The protein belongs to the complex I 49 kDa subunit family. As to quaternary structure, NDH-1 can be composed of about 15 different subunits; different subcomplexes with different compositions have been identified which probably have different functions. Post-translationally, the initiator methionine has been seen to be kept and removed.

It is found in the cellular thylakoid membrane. The enzyme catalyses a plastoquinone + NADH + (n+1) H(+)(in) = a plastoquinol + NAD(+) + n H(+)(out). It catalyses the reaction a plastoquinone + NADPH + (n+1) H(+)(in) = a plastoquinol + NADP(+) + n H(+)(out). Functionally, NDH-1 shuttles electrons from an unknown electron donor, via FMN and iron-sulfur (Fe-S) centers, to quinones in the respiratory and/or the photosynthetic chain. The immediate electron acceptor for the enzyme in this species is believed to be plastoquinone. Couples the redox reaction to proton translocation, and thus conserves the redox energy in a proton gradient. Cyanobacterial NDH-1 also plays a role in inorganic carbon-concentration. The sequence is that of NAD(P)H-quinone oxidoreductase subunit H (ndhH) from Synechocystis sp. (strain ATCC 27184 / PCC 6803 / Kazusa).